We begin with the raw amino-acid sequence, 189 residues long: Protein GrpE (189 aa).

Over residues 1 to 14 (MTDHTPLQPKHEIT) the composition is skewed to basic and acidic residues. The tract at residues 1–23 (MTDHTPLQPKHEITDQADQDTSA) is disordered.

This sequence belongs to the GrpE family. Homodimer.

The protein localises to the cytoplasm. Functionally, participates actively in the response to hyperosmotic and heat shock by preventing the aggregation of stress-denatured proteins, in association with DnaK and GrpE. It is the nucleotide exchange factor for DnaK and may function as a thermosensor. Unfolded proteins bind initially to DnaJ; upon interaction with the DnaJ-bound protein, DnaK hydrolyzes its bound ATP, resulting in the formation of a stable complex. GrpE releases ADP from DnaK; ATP binding to DnaK triggers the release of the substrate protein, thus completing the reaction cycle. Several rounds of ATP-dependent interactions between DnaJ, DnaK and GrpE are required for fully efficient folding. The polypeptide is Protein GrpE (Lawsonia intracellularis (strain PHE/MN1-00)).